We begin with the raw amino-acid sequence, 293 residues long: Bifunctional protein FolD (293 aa).

NADP(+) is bound by residues 164 to 166 (GRS), serine 193, and threonine 234.

It belongs to the tetrahydrofolate dehydrogenase/cyclohydrolase family. In terms of assembly, homodimer.

The catalysed reaction is (6R)-5,10-methylene-5,6,7,8-tetrahydrofolate + NADP(+) = (6R)-5,10-methenyltetrahydrofolate + NADPH. It catalyses the reaction (6R)-5,10-methenyltetrahydrofolate + H2O = (6R)-10-formyltetrahydrofolate + H(+). It functions in the pathway one-carbon metabolism; tetrahydrofolate interconversion. Catalyzes the oxidation of 5,10-methylenetetrahydrofolate to 5,10-methenyltetrahydrofolate and then the hydrolysis of 5,10-methenyltetrahydrofolate to 10-formyltetrahydrofolate. This Phocaeicola vulgatus (strain ATCC 8482 / DSM 1447 / JCM 5826 / CCUG 4940 / NBRC 14291 / NCTC 11154) (Bacteroides vulgatus) protein is Bifunctional protein FolD.